The chain runs to 219 residues: Auxin-responsive protein IAA24 (219 aa).

An EAR-like (transcriptional repression) motif is present at residues Leu-24–Leu-28. 2 disordered regions span residues Leu-24–Gln-88 and Ala-109–Gly-128. Residues Ser-60–Ser-71 are compositionally biased toward polar residues. The 87-residue stretch at Gly-129–Gly-215 folds into the PB1 domain.

The protein belongs to the Aux/IAA family. Homodimers and heterodimers. As to expression, highly expressed in flowers. Expressed in seedlings.

The protein resides in the nucleus. Its function is as follows. Aux/IAA proteins are short-lived transcriptional factors that function as repressors of early auxin response genes at low auxin concentrations. The chain is Auxin-responsive protein IAA24 (IAA24) from Oryza sativa subsp. japonica (Rice).